The chain runs to 353 residues: O-antigen biosynthesis glycosyltransferase WclY (353 aa).

The chain crosses the membrane as a helical span at residues 116–136; it reads SLIGGLLWCSIWLFFDKLVIL. UDP is bound by residues Asn-190 and Glu-271. An E(x7)E motif is present at residues 263–271; it reads EGFGLTVLE.

Belongs to the glycosyltransferase group 1 family. Glycosyltransferase 4 subfamily.

The protein localises to the membrane. Its pathway is bacterial outer membrane biogenesis; LPS O-antigen biosynthesis. With respect to regulation, activated by 5mM MnCl(2) and MgCl(2). No significant effect on activity by 5 mM ethylenediaminetetraacetic acid (EDTA), 0.125-0.5% Triton X-100 or dithiothreitol (DTT). Inhibited by 5 mM Zn-acetate. Involved in the assembly of the O-repeating unit during O-antigen biosynthesis. Glucosyltransferase accountable for the alpha-D-Glc-1,4-beta-D-Gal linkage within the O-antigen. Transfers alpha-1,4-Glc to the Gal moiety of a specific Gal-beta1-3GalNAc-alpha-OPO3-PO3-phenoxyundecyl (Gal-beta1-3GalNAc-PP-PhU) synthetic natural acceptor substrate analog. Requires both Gal-beta1-3GalNAc-alpha and the diphosphate moiety in the acceptor. Not active with GalNAc-PP-PhU, GlcNAc-PP-PhU, Gal-beta1-3GalNAc-alpha-O-benzyl, D-Rha-alpha1-3GlcNAc-alpha-PP-PhU or D-Man-alpha1-3Man-alpha-5-benzamidopentyl (BAP), nor with glycopeptides TTTVTP (Gal-beta1-3GalNAc-alpha-)TPTG or TT (Gal-beta1-3GalNAc-alpha-)TVTPTPTG as acceptor substrates. Has a broad nucleotide sugar donor substrate specificity with ADP-Glc, TDP-Glc and UDP-Glc as superior donors. Gal, GlcNAc, and GalNAc residues are transferred from UDP-sugars, but with low activity. UDP-Xyl, UDP-GlcA, GDP-Fuc or GDP-K-Rha do not act as donors. The protein is O-antigen biosynthesis glycosyltransferase WclY of Escherichia coli.